A 73-amino-acid chain; its full sequence is Putative defensin-like protein 277 (73 aa).

A signal peptide spans 1–24 (MSAQKIYLASLLLFICLVFPQSTA). 4 cysteine pairs are disulfide-bonded: Cys-27-Cys-64, Cys-33-Cys-52, Cys-39-Cys-62, and Cys-43-Cys-63.

This sequence belongs to the DEFL family.

Its subcellular location is the secreted. The polypeptide is Putative defensin-like protein 277 (Arabidopsis thaliana (Mouse-ear cress)).